We begin with the raw amino-acid sequence, 136 residues long: Protein PsiE homolog (136 aa).

4 helical membrane-spanning segments follow: residues 15–35, 58–78, 82–102, and 108–128; these read AMQAVLNLALLCLGIILVVFL, VEGLVVYFLYFEFIALIVKYF, FHFPLRYFVYIGITAIVRLII, and PLAVLIYSAAILILVITLWLC.

This sequence belongs to the PsiE family.

Its subcellular location is the cell inner membrane. This chain is Protein PsiE homolog, found in Klebsiella pneumoniae subsp. pneumoniae (strain ATCC 700721 / MGH 78578).